A 153-amino-acid polypeptide reads, in one-letter code: UPF0540 protein At1g62220 (153 aa).

The first 21 residues, 1–21 (MNATKFVVLLVISVLCAIVTA), serve as a signal peptide directing secretion. Disordered stretches follow at residues 63 to 82 (SSAT…YENG) and 122 to 153 (ARAN…GKKD). The segment covering 122-132 (ARANGKVASAS) has biased composition (low complexity). A compositionally biased stretch (basic residues) spans 141 to 153 (KKGKGKKGKGKKD).

The protein belongs to the UPF0540 family.

This chain is UPF0540 protein At1g62220, found in Arabidopsis thaliana (Mouse-ear cress).